Reading from the N-terminus, the 526-residue chain is Cytochrome P450 4e2 (526 aa).

Residues Glu-307 and Cys-444 each contribute to the heme site.

This sequence belongs to the cytochrome P450 family. It depends on heme as a cofactor.

Its subcellular location is the endoplasmic reticulum membrane. It localises to the microsome membrane. In terms of biological role, may be involved in the metabolism of insect hormones and in the breakdown of synthetic insecticides. This Drosophila melanogaster (Fruit fly) protein is Cytochrome P450 4e2 (Cyp4e2).